The sequence spans 1029 residues: Serine/threonine-protein kinase KSP1 (1029 aa).

The Protein kinase domain maps to 18-351 (YQKIEDISEG…TELQNLSEYT (334 aa)). ATP-binding positions include 27-35 (GSYGYVSLA) and lysine 47. Positions 56–79 (GQYDGPQDDENDCDSSDCDDDEDT) are enriched in acidic residues. Residues 56–105 (GQYDGPQDDENDCDSSDCDDDEDTKVDTDRHENENGNASSNNGSSREKKH) form a disordered region. The segment covering 80-89 (KVDTDRHENE) has biased composition (basic and acidic residues). The segment covering 90 to 99 (NGNASSNNGS) has biased composition (low complexity). Aspartate 207 (proton acceptor) is an active-site residue. The disordered stretch occupies residues 377–397 (VPPSSAPVSLPTPISSSNKQH). Residues serine 416 and serine 419 each carry the phosphoserine modification. Phosphothreonine occurs at positions 501, 504, and 526. Phosphoserine is present on serine 529. The segment at 532–570 (HRYMEGFSNNNNKQYRQNRNYNNNNNNSNNNHGSNYNNF) is disordered. Residues 538–570 (FSNNNNKQYRQNRNYNNNNNNSNNNHGSNYNNF) show a composition bias toward low complexity. A Phosphoserine modification is found at serine 646. A disordered region spans residues 732–824 (STNHNNNGNN…SDSKELEQER (93 aa)). The segment covering 734–743 (NHNNNGNNNH) has biased composition (low complexity). Positions 744 to 754 (IDTNSTTNQYH) are enriched in polar residues. Basic and acidic residues predominate over residues 813 to 824 (HSSDSKELEQER). 2 positions are modified to phosphoserine: serine 845 and serine 884. The tract at residues 949–978 (EYEGESDKMAHGKMEGGDNESSSTSPDERQ) is disordered. The segment covering 953–964 (ESDKMAHGKMEG) has biased composition (basic and acidic residues). Threonine 1005 bears the Phosphothreonine mark. Serine 1014 carries the phosphoserine modification.

This sequence belongs to the protein kinase superfamily. Ser/Thr protein kinase family. CK2 subfamily. In terms of processing, phosphorylated by PKA in a TORC1-dependent manner. Phosphorylation at PKA consensus sites RRxS/T decreases upon rapamycin treatment.

It is found in the nucleus. The enzyme catalyses L-seryl-[protein] + ATP = O-phospho-L-seryl-[protein] + ADP + H(+). It catalyses the reaction L-threonyl-[protein] + ATP = O-phospho-L-threonyl-[protein] + ADP + H(+). In terms of biological role, may act on PRP20. The polypeptide is Serine/threonine-protein kinase KSP1 (KSP1) (Saccharomyces cerevisiae (strain ATCC 204508 / S288c) (Baker's yeast)).